The following is a 179-amino-acid chain: ATP-dependent protease subunit HslV (179 aa).

The active site involves Thr-7. Positions 162, 165, and 168 each coordinate Na(+).

Belongs to the peptidase T1B family. HslV subfamily. As to quaternary structure, a double ring-shaped homohexamer of HslV is capped on each side by a ring-shaped HslU homohexamer. The assembly of the HslU/HslV complex is dependent on binding of ATP.

It localises to the cytoplasm. It carries out the reaction ATP-dependent cleavage of peptide bonds with broad specificity.. Its activity is regulated as follows. Allosterically activated by HslU binding. In terms of biological role, protease subunit of a proteasome-like degradation complex believed to be a general protein degrading machinery. This chain is ATP-dependent protease subunit HslV, found in Teredinibacter turnerae (strain ATCC 39867 / T7901).